A 338-amino-acid polypeptide reads, in one-letter code: tRNA-specific 2-thiouridylase MnmA (338 aa).

Residues 6-13 and methionine 32 contribute to the ATP site; that span reads ALSGGVDS. Cysteine 92 (nucleophile) is an active-site residue. An intrachain disulfide couples cysteine 92 to cysteine 186. Glycine 116 provides a ligand contact to ATP. The segment at 134–136 is interaction with tRNA; the sequence is KDQ. Cysteine 186 functions as the Cysteine persulfide intermediate in the catalytic mechanism. The interaction with tRNA stretch occupies residues 288-289; the sequence is RY.

This sequence belongs to the MnmA/TRMU family.

The protein resides in the cytoplasm. It catalyses the reaction S-sulfanyl-L-cysteinyl-[protein] + uridine(34) in tRNA + AH2 + ATP = 2-thiouridine(34) in tRNA + L-cysteinyl-[protein] + A + AMP + diphosphate + H(+). Catalyzes the 2-thiolation of uridine at the wobble position (U34) of tRNA, leading to the formation of s(2)U34. The polypeptide is tRNA-specific 2-thiouridylase MnmA (Campylobacter fetus subsp. fetus (strain 82-40)).